The sequence spans 364 residues: UDP-N-acetylglucosamine--N-acetylmuramyl-(pentapeptide) pyrophosphoryl-undecaprenol N-acetylglucosamine transferase 1 (364 aa).

UDP-N-acetyl-alpha-D-glucosamine-binding positions include T10–G12, N124, S195, I250, and Q295.

Belongs to the glycosyltransferase 28 family. MurG subfamily.

The protein resides in the cell membrane. It carries out the reaction di-trans,octa-cis-undecaprenyl diphospho-N-acetyl-alpha-D-muramoyl-L-alanyl-D-glutamyl-meso-2,6-diaminopimeloyl-D-alanyl-D-alanine + UDP-N-acetyl-alpha-D-glucosamine = di-trans,octa-cis-undecaprenyl diphospho-[N-acetyl-alpha-D-glucosaminyl-(1-&gt;4)]-N-acetyl-alpha-D-muramoyl-L-alanyl-D-glutamyl-meso-2,6-diaminopimeloyl-D-alanyl-D-alanine + UDP + H(+). It participates in cell wall biogenesis; peptidoglycan biosynthesis. In terms of biological role, cell wall formation. Catalyzes the transfer of a GlcNAc subunit on undecaprenyl-pyrophosphoryl-MurNAc-pentapeptide (lipid intermediate I) to form undecaprenyl-pyrophosphoryl-MurNAc-(pentapeptide)GlcNAc (lipid intermediate II). This is UDP-N-acetylglucosamine--N-acetylmuramyl-(pentapeptide) pyrophosphoryl-undecaprenol N-acetylglucosamine transferase 1 from Bacillus thuringiensis subsp. konkukian (strain 97-27).